A 320-amino-acid polypeptide reads, in one-letter code: L-lactate dehydrogenase A (320 aa).

The substrate site is built by Arg88, Asn120, and Arg151. Asn120 is a binding site for NAD(+). His175 functions as the Proton acceptor in the catalytic mechanism.

Belongs to the LDH/MDH superfamily. LDH family. In terms of assembly, homotetramer.

The protein resides in the cytoplasm. It catalyses the reaction (S)-lactate + NAD(+) = pyruvate + NADH + H(+). Its pathway is fermentation; pyruvate fermentation to lactate; (S)-lactate from pyruvate: step 1/1. Converts pyruvate to lactate. The protein is L-lactate dehydrogenase A (LDHA) of Rhizopus oryzae (Mucormycosis agent).